The following is a 115-amino-acid chain: U3-lycotoxin-Ls1g (115 aa).

An N-terminal signal peptide occupies residues 1-20 (MKFVLLFGVFLVTLFSYSSA). A propeptide spanning residues 21–44 (EMLDDFDQADEDELLSLIEKEEAR) is cleaved from the precursor. Intrachain disulfides connect Cys48-Cys63, Cys55-Cys72, Cys62-Cys87, and Cys74-Cys85.

It belongs to the neurotoxin 19 (CSTX) family. 01 subfamily. Expressed by the venom gland.

Its subcellular location is the secreted. In Lycosa singoriensis (Wolf spider), this protein is U3-lycotoxin-Ls1g.